Here is a 447-residue protein sequence, read N- to C-terminus: tRNA-2-methylthio-N(6)-dimethylallyladenosine synthase (447 aa).

Positions 8–126 (KKVVTLAYGC…FQRLLEEAEE (119 aa)) constitute an MTTase N-terminal domain. Positions 17, 53, 87, 162, 166, and 169 each coordinate [4Fe-4S] cluster. Positions 148 to 378 (AKGKLKAYVN…ITVQNAQSLA (231 aa)) constitute a Radical SAM core domain. Positions 381 to 444 (QEMIGKTCEV…SWTLFGECRA (64 aa)) constitute a TRAM domain.

The protein belongs to the methylthiotransferase family. MiaB subfamily. Monomer. [4Fe-4S] cluster serves as cofactor.

Its subcellular location is the cytoplasm. The catalysed reaction is N(6)-dimethylallyladenosine(37) in tRNA + (sulfur carrier)-SH + AH2 + 2 S-adenosyl-L-methionine = 2-methylsulfanyl-N(6)-dimethylallyladenosine(37) in tRNA + (sulfur carrier)-H + 5'-deoxyadenosine + L-methionine + A + S-adenosyl-L-homocysteine + 2 H(+). Catalyzes the methylthiolation of N6-(dimethylallyl)adenosine (i(6)A), leading to the formation of 2-methylthio-N6-(dimethylallyl)adenosine (ms(2)i(6)A) at position 37 in tRNAs that read codons beginning with uridine. The protein is tRNA-2-methylthio-N(6)-dimethylallyladenosine synthase of Desulfitobacterium hafniense (strain Y51).